Here is a 1216-residue protein sequence, read N- to C-terminus: Apical endosomal glycoprotein (1216 aa).

The N-terminal stretch at 1–22 (MPLSSHLLPALVLFLAGSSGWA) is a signal peptide. Residues 23 to 1151 (WVPNHCRSPG…SPGNTAAPGS (1129 aa)) lie on the Extracellular side of the membrane. An LDL-receptor class A 1; truncated domain is found at 26–53 (NHCRSPGQAVCNFVCDCRDCSDEAQCGY). Positions 64–222 (FACDFEQDPC…DDLEFWDCGL (159 aa)) constitute an MAM 1 domain. N-linked (GlcNAc...) asparagine glycosylation is present at Asn-203. The LDL-receptor class A 2 domain occupies 228 to 266 (NCPPGHHHCQNKVCVEPQQLCDGEDNCGDLSDENPLTCG). 3 cysteine pairs are disulfide-bonded: Cys-229–Cys-241, Cys-236–Cys-254, and Cys-248–Cys-265. In terms of domain architecture, MAM 2 spans 269-425 (IATDFETGLG…DLILSDHCRP (157 aa)). The tract at residues 280–307 (WNRSEGWSRNHRAGGPERPSWPRRDHSR) is disordered. Asn-281 and Asn-339 each carry an N-linked (GlcNAc...) asparagine glycan. A disordered region spans residues 429–455 (VSTLQPLPPGPRAPAPQPLPPSSRLQD). A compositionally biased stretch (pro residues) spans 434-449 (PLPPGPRAPAPQPLPP). An LDL-receptor class A 3 domain is found at 456–491 (SCKQGHLACGDLCVPPEQLCDFEEQCAGGEDEQACG). 3 cysteine pairs are disulfide-bonded: Cys-457–Cys-468, Cys-464–Cys-481, and Cys-475–Cys-490. 4 MAM domains span residues 491–644 (GTTD…DCSP), 654–809 (VSCN…PCWA), 811–969 (NYCS…PCPQ), and 971–1138 (GSCD…HCQQ). Residues Asn-583 and Asn-636 are each glycosylated (N-linked (GlcNAc...) asparagine). Asn-835 is a glycosylation site (N-linked (GlcNAc...) asparagine). Residues 1152–1172 (VPAVVGSALLLLMLLVLLGLG) traverse the membrane as a helical segment. Over 1173 to 1216 (GRRWLQKKGSCPFQSNTEATAPGFDNILFNADGVTLPASVTSDP) the chain is Cytoplasmic.

The protein resides in the membrane. Probably involved in the sorting and selective transport of receptors and ligands across polarized epithelia. In Homo sapiens (Human), this protein is Apical endosomal glycoprotein.